The sequence spans 217 residues: MQDNALTIALSKGRIFEETLPLLAAAGIVPTEEPEKSRKLIIGTNHENIRLVIVRATDVPTYVRYGAADFGIAGKDVLIEHGGTGLYRPLDLEIAKCRMMVAVRKGFDYEAASQPGCRLKIATKYPEIAASHFAGKGVHVDIIKLYGSMELAPLVGLSDAIVDLVSTGNTLKANGLEAVEHIVDISSRLVVNKAALKTKYALLEPIIQAFGGAVKAK.

The protein belongs to the ATP phosphoribosyltransferase family. Short subfamily. In terms of assembly, heteromultimer composed of HisG and HisZ subunits.

The protein resides in the cytoplasm. It carries out the reaction 1-(5-phospho-beta-D-ribosyl)-ATP + diphosphate = 5-phospho-alpha-D-ribose 1-diphosphate + ATP. Its pathway is amino-acid biosynthesis; L-histidine biosynthesis; L-histidine from 5-phospho-alpha-D-ribose 1-diphosphate: step 1/9. Its function is as follows. Catalyzes the condensation of ATP and 5-phosphoribose 1-diphosphate to form N'-(5'-phosphoribosyl)-ATP (PR-ATP). Has a crucial role in the pathway because the rate of histidine biosynthesis seems to be controlled primarily by regulation of HisG enzymatic activity. In Neisseria meningitidis serogroup A / serotype 4A (strain DSM 15465 / Z2491), this protein is ATP phosphoribosyltransferase (hisG).